The chain runs to 121 residues: MGLFSKRQIGNQYETLAKQYLQRQGLRFLDQNYLTKFGEIDLIFQQDETIVFVEVKYRKNDHFGSAAEMVTNAKMRKLIKTAQVWLSQQRTMNTIDYRFDVIAIHDSGRDINWIQNAISEG.

The protein belongs to the UPF0102 family.

The polypeptide is UPF0102 protein VP0448 (Vibrio parahaemolyticus serotype O3:K6 (strain RIMD 2210633)).